A 680-amino-acid polypeptide reads, in one-letter code: DNA-directed RNA polymerase subunit beta' (680 aa).

Cysteine 69, cysteine 71, cysteine 87, and cysteine 90 together coordinate Zn(2+). Mg(2+)-binding residues include aspartate 489, aspartate 491, and aspartate 493.

This sequence belongs to the RNA polymerase beta' chain family. RpoC1 subfamily. In plastids the minimal PEP RNA polymerase catalytic core is composed of four subunits: alpha, beta, beta', and beta''. When a (nuclear-encoded) sigma factor is associated with the core the holoenzyme is formed, which can initiate transcription. Mg(2+) serves as cofactor. It depends on Zn(2+) as a cofactor.

The protein resides in the plastid. It localises to the chloroplast. It catalyses the reaction RNA(n) + a ribonucleoside 5'-triphosphate = RNA(n+1) + diphosphate. In terms of biological role, DNA-dependent RNA polymerase catalyzes the transcription of DNA into RNA using the four ribonucleoside triphosphates as substrates. This chain is DNA-directed RNA polymerase subunit beta', found in Barbarea verna (Land cress).